The primary structure comprises 229 residues: Urease accessory protein UreF (229 aa).

This sequence belongs to the UreF family. UreD, UreF and UreG form a complex that acts as a GTP-hydrolysis-dependent molecular chaperone, activating the urease apoprotein by helping to assemble the nickel containing metallocenter of UreC. The UreE protein probably delivers the nickel.

It is found in the cytoplasm. Required for maturation of urease via the functional incorporation of the urease nickel metallocenter. The polypeptide is Urease accessory protein UreF (Staphylococcus aureus (strain MRSA252)).